The chain runs to 52 residues: Proteinase inhibitor (52 aa).

At Gln-1 the chain carries Pyrrolidone carboxylic acid. Disulfide bonds link Cys-3–Cys-40, Cys-6–Cys-24, Cys-7–Cys-36, and Cys-13–Cys-49.

The protein belongs to the protease inhibitor I20 (potato type II proteinase inhibitor) family.

Its subcellular location is the secreted. This chain is Proteinase inhibitor, found in Solanum melongena (Eggplant).